The chain runs to 468 residues: Probable cytosol aminopeptidase (468 aa).

Residues Lys-242 and Asp-247 each coordinate Mn(2+). Residue Lys-254 is part of the active site. Asp-265, Asp-324, and Glu-326 together coordinate Mn(2+). Arg-328 is a catalytic residue.

Belongs to the peptidase M17 family. The cofactor is Mn(2+).

Its subcellular location is the cytoplasm. The catalysed reaction is Release of an N-terminal amino acid, Xaa-|-Yaa-, in which Xaa is preferably Leu, but may be other amino acids including Pro although not Arg or Lys, and Yaa may be Pro. Amino acid amides and methyl esters are also readily hydrolyzed, but rates on arylamides are exceedingly low.. It catalyses the reaction Release of an N-terminal amino acid, preferentially leucine, but not glutamic or aspartic acids.. Functionally, presumably involved in the processing and regular turnover of intracellular proteins. Catalyzes the removal of unsubstituted N-terminal amino acids from various peptides. In Neisseria meningitidis serogroup A / serotype 4A (strain DSM 15465 / Z2491), this protein is Probable cytosol aminopeptidase.